The primary structure comprises 227 residues: ATP-dependent Clp protease proteolytic subunit (227 aa).

Ser-120 functions as the Nucleophile in the catalytic mechanism. The active site involves His-145.

Belongs to the peptidase S14 family. Fourteen ClpP subunits assemble into 2 heptameric rings which stack back to back to give a disk-like structure with a central cavity, resembling the structure of eukaryotic proteasomes.

It is found in the cytoplasm. The catalysed reaction is Hydrolysis of proteins to small peptides in the presence of ATP and magnesium. alpha-casein is the usual test substrate. In the absence of ATP, only oligopeptides shorter than five residues are hydrolyzed (such as succinyl-Leu-Tyr-|-NHMec, and Leu-Tyr-Leu-|-Tyr-Trp, in which cleavage of the -Tyr-|-Leu- and -Tyr-|-Trp bonds also occurs).. Cleaves peptides in various proteins in a process that requires ATP hydrolysis. Has a chymotrypsin-like activity. Plays a major role in the degradation of misfolded proteins. In Rickettsia bellii (strain RML369-C), this protein is ATP-dependent Clp protease proteolytic subunit.